Consider the following 103-residue polypeptide: N(4)-acetylcytidine amidohydrolase (103 aa).

The region spanning 6-101 (ITFFQRFQDD…QTQFYVIEFK (96 aa)) is the ASCH domain. The active-site Proton acceptor is the Lys21. Thr24 (nucleophile) is an active-site residue. Glu74 acts as the Proton donor in catalysis.

It belongs to the N(4)-acetylcytidine amidohydrolase family.

The enzyme catalyses N(4)-acetylcytidine + H2O = cytidine + acetate + H(+). It carries out the reaction N(4)-acetyl-2'-deoxycytidine + H2O = 2'-deoxycytidine + acetate + H(+). It catalyses the reaction N(4)-acetylcytosine + H2O = cytosine + acetate + H(+). Functionally, catalyzes the hydrolysis of N(4)-acetylcytidine (ac4C). This chain is N(4)-acetylcytidine amidohydrolase (yqfB), found in Escherichia coli O127:H6 (strain E2348/69 / EPEC).